We begin with the raw amino-acid sequence, 88 residues long: Small ribosomal subunit protein uS15 (88 aa).

Belongs to the universal ribosomal protein uS15 family. Part of the 30S ribosomal subunit. Forms a bridge to the 50S subunit in the 70S ribosome, contacting the 23S rRNA.

In terms of biological role, one of the primary rRNA binding proteins, it binds directly to 16S rRNA where it helps nucleate assembly of the platform of the 30S subunit by binding and bridging several RNA helices of the 16S rRNA. Its function is as follows. Forms an intersubunit bridge (bridge B4) with the 23S rRNA of the 50S subunit in the ribosome. The chain is Small ribosomal subunit protein uS15 from Borreliella afzelii (strain PKo) (Borrelia afzelii).